The following is a 285-amino-acid chain: Putative sugar uptake protein lin0444 (285 aa).

A run of 9 helical transmembrane segments spans residues 2 to 21, 31 to 50, 55 to 77, 111 to 133, 146 to 168, 172 to 194, 207 to 229, 233 to 255, and 262 to 284; these read SIYL…PIIA, QLLG…FWIL, TVLS…LLQF, WQTV…GVVM, SVSF…YVVT, FDVT…AIGI, VTFN…LATA, VATS…ILIF, and LEWT…LSLL.

This sequence belongs to the GRP transporter (TC 2.A.7.5) family.

The protein localises to the cell membrane. This chain is Putative sugar uptake protein lin0444, found in Listeria innocua serovar 6a (strain ATCC BAA-680 / CLIP 11262).